The primary structure comprises 402 residues: Nicotinate phosphoribosyltransferase (402 aa).

A Phosphohistidine; by autocatalysis modification is found at histidine 226.

It belongs to the NAPRTase family. In terms of processing, transiently phosphorylated on a His residue during the reaction cycle. Phosphorylation strongly increases the affinity for substrates and increases the rate of nicotinate D-ribonucleotide production. Dephosphorylation regenerates the low-affinity form of the enzyme, leading to product release.

The catalysed reaction is nicotinate + 5-phospho-alpha-D-ribose 1-diphosphate + ATP + H2O = nicotinate beta-D-ribonucleotide + ADP + phosphate + diphosphate. It functions in the pathway cofactor biosynthesis; NAD(+) biosynthesis; nicotinate D-ribonucleotide from nicotinate: step 1/1. Catalyzes the synthesis of beta-nicotinate D-ribonucleotide from nicotinate and 5-phospho-D-ribose 1-phosphate at the expense of ATP. This is Nicotinate phosphoribosyltransferase from Chromobacterium violaceum (strain ATCC 12472 / DSM 30191 / JCM 1249 / CCUG 213 / NBRC 12614 / NCIMB 9131 / NCTC 9757 / MK).